Consider the following 923-residue polypeptide: Protein prickle (923 aa).

Residues 1 to 196 form a disordered region; sequence MSYPYQKSHH…HPFHSPASAA (196 aa). Positions 11–34 are enriched in low complexity; the sequence is QTQQPQQNGHPQHQLMLQQQQQAD. Residues 37–49 show a composition bias toward basic residues; the sequence is PHHHHHHHVHHAT. Low complexity-rich tracts occupy residues 59–73 and 106–118; these read RSPLRSPQSPPLYSG and MPGMMPGQQPPGM. Positions 122 to 134 are enriched in gly residues; it reads LGGGGGGGGGGSA. Low complexity-rich tracts occupy residues 152–169 and 184–196; these read STVTNTSSTATNAPSARS and SSHHPFHSPASAA. One can recognise a PET domain in the interval 275-383; sequence GGGHNYSQSD…TVKQITTTLI (109 aa). LIM zinc-binding domains follow at residues 382-446, 447-507, and 508-570; these read LICE…ETLK, PRCS…MFAE, and YCDY…GEPP. Disordered regions lie at residues 571–668 and 703–867; these read TPSD…LDLT and GPIA…SSAD. Residues 709 to 718 are compositionally biased toward gly residues; it reads NGNGPTGGGP. Residues 738–748 show a composition bias toward polar residues; sequence ESPSFSGTNSP. Basic and acidic residues predominate over residues 777 to 786; it reads HSIKEVRFEG. Residues 792–805 are compositionally biased toward polar residues; it reads LPRTKSYCQRNGGQ. Acidic residues predominate over residues 817–827; the sequence is SDDDELAEDET. Basic and acidic residues predominate over residues 840–852; the sequence is QREQQRPVDDSDA. Residues 853-865 show a composition bias toward low complexity; that stretch reads RSVCSTCSSSSSS.

Belongs to the prickle / espinas / testin family. Interacts with dsh; PET and LIM domains interact with dsh DEP domain, in wing cells. Interacts with Vang in photoreceptor cells.

The protein resides in the cell membrane. Functionally, acts in a planar cell polarity (PCP) complex; polarization along the apical/basal axis of epithelial cells. PCP signaling in the wing disk requires the receptor fz and the cytoplasmic proteins dsh and pk. These act in a feedback loop leading to activation of the jnk cascade and subsequent polarized arrangement of hairs and bristles. Dgo and pk compete with one another for dsh binding, thereby modulating fz dsh activity and ensuring tight control over fz PCP signaling. Vang, stan and pk function together to regulate the establishment of tissue polarity in the adult eye. This chain is Protein prickle, found in Anopheles gambiae (African malaria mosquito).